We begin with the raw amino-acid sequence, 315 residues long: Protein sprouty homolog 2 (315 aa).

Over residues methionine 1–leucine 15 the composition is skewed to polar residues. Disordered stretches follow at residues methionine 1 to histidine 39 and asparagine 51 to phenylalanine 140. The span at aspartate 20 to aspartate 32 shows a compositional bias: basic and acidic residues. Over residues serine 108–phenylalanine 140 the composition is skewed to low complexity. The segment at serine 118–threonine 315 is required for interaction with CAV1. The SPR domain maps to arginine 177 to cysteine 291. The interval cysteine 178–threonine 315 is required for interaction with TESK1.

It belongs to the sprouty family. In terms of assembly, forms heterodimers with SPRY1. Forms a tripartite complex containing GAB1, METTL13 and SPRY2. Within the complex interacts with METTL13. Interacts with RAF1. Interacts (via C-terminus) with TESK1 (via C-terminus); the interaction disrupts SPRY2 interaction with GRB2, potentially via disruption of SPRY2 serine dephosphorylation. Interacts with PPP2R1A/PP2A-A and PPP2CA/PP2A-C; the interaction with PPP2CA/PP2A-C is inhibited by interaction with TESK1, possibly by vesicular sequestration of SPRY2. Inhibition of the interaction with the serine/threonine-protein phosphatase 2A (PP2A) holoenzyme results in loss of PP2A-mediated dephosphorylation, resulting in the loss of SPRY2 interaction with GRB2. Interacts with GRB2. Interacts with CBL/C-CBL; the interaction inhibits CBL-mediated ubiquitination of EGFR. Interacts (via C-terminus) with CAV1 (via C-terminus). Post-translationally, cleaved at Pro-144 by the prolyl endopeptidase FAP (seprase) activity (in vitro).

Its subcellular location is the cytoplasm. The protein localises to the cytoskeleton. It is found in the cell projection. It localises to the ruffle membrane. Functionally, antagonist of fibroblast growth factor (FGF) pathways via inhibition of FGF-mediated phosphorylation of ERK1/2. Thereby acts as an antagonist of FGF-induced retinal lens fiber differentiation, may inhibit limb bud outgrowth and may negatively modulate respiratory organogenesis. Inhibits TGFB-induced epithelial-to-mesenchymal transition in retinal lens epithelial cells. Inhibits CBL/C-CBL-mediated EGFR ubiquitination. The polypeptide is Protein sprouty homolog 2 (SPRY2) (Macaca fascicularis (Crab-eating macaque)).